The sequence spans 328 residues: Zinc transporter ZIP13 (328 aa).

Topologically, residues 1–7 (MPGCPCP) are lumenal. Residues 8–28 (GCGMAGPRLLFLTALALELLG) traverse the membrane as a helical segment. Topologically, residues 29 to 68 (RAGGSQPALRSRGTATACRLDNKESESWGALLSGERLDTW) are cytoplasmic. The chain crosses the membrane as a helical span at residues 69–89 (ICSLLGSLMVGLSGVFPLLVI). The Lumenal segment spans residues 90-108 (PLEMGTMLRSEAGAWHLKQ). The chain crosses the membrane as a helical span at residues 109–129 (LLSFALGGLLGNVFLHLLPEA). Residues 130 to 149 (WAYTCSASPGGEGQSLQQQQ) lie on the Cytoplasmic side of the membrane. Residues 150 to 170 (QLGLWVIAGILTFLALEKMFL) form a helical membrane-spanning segment. Topologically, residues 171-199 (DSKEEGTSQVSGYLNLLANTIDNFTHGLA) are lumenal. Residues 200–220 (VAASFLVSKKIGLLTTMAILL) traverse the membrane as a helical segment. The XEXPHE-motif signature appears at 221 to 226 (HEIPHE). Residues 221–242 (HEIPHEVGDFAILLRAGFDRWS) lie on the Cytoplasmic side of the membrane. The chain crosses the membrane as a helical span at residues 243-263 (AAKLQLSTALGGLLGAGFAIC). Topologically, residues 264–273 (TQSPKGVEET) are lumenal. Residues 274–294 (AAWVLPFTSGGFLYIALVNVL) traverse the membrane as a helical segment. The Cytoplasmic segment spans residues 295–306 (PDLLEEEDPWRS). The helical transmembrane segment at 307–327 (LQQLLLLCAGIVVMVLFSLFV) threads the bilayer. Asp-328 is a topological domain (lumenal).

It belongs to the ZIP transporter (TC 2.A.5) family. As to quaternary structure, homodimer.

It localises to the golgi apparatus membrane. The protein resides in the cytoplasmic vesicle membrane. The protein localises to the endoplasmic reticulum membrane. The catalysed reaction is Zn(2+)(in) = Zn(2+)(out). Functions as a zinc transporter transporting Zn(2+) from the Golgi apparatus to the cytosol and thus influences the zinc level at least in areas of the cytosol. May regulate beige adipocyte differentiation. The polypeptide is Zinc transporter ZIP13 (Pongo abelii (Sumatran orangutan)).